Here is a 262-residue protein sequence, read N- to C-terminus: Glucosamine-6-phosphate deaminase (262 aa).

The Proton acceptor; for enolization step role is filled by aspartate 63. Asparagine 129 functions as the For ring-opening step in the catalytic mechanism. Residue histidine 131 is the Proton acceptor; for ring-opening step of the active site. The active-site For ring-opening step is glutamate 136.

Belongs to the glucosamine/galactosamine-6-phosphate isomerase family. NagB subfamily.

It carries out the reaction alpha-D-glucosamine 6-phosphate + H2O = beta-D-fructose 6-phosphate + NH4(+). Its pathway is amino-sugar metabolism; N-acetylneuraminate degradation; D-fructose 6-phosphate from N-acetylneuraminate: step 5/5. Functionally, catalyzes the reversible isomerization-deamination of glucosamine 6-phosphate (GlcN6P) to form fructose 6-phosphate (Fru6P) and ammonium ion. The protein is Glucosamine-6-phosphate deaminase of Bacillus cereus (strain B4264).